The chain runs to 61 residues: Temporin-ALj (61 aa).

The signal sequence occupies residues 1 to 22; that stretch reads MFTLKKSLLLLFFLATINLSFC. Residues 23–46 constitute a propeptide that is removed on maturation; it reads EQERNAEEERRDEPDERNAEVEKR. Position 59 is a leucine amide (Leu59).

Belongs to the frog skin active peptide (FSAP) family. Temporin subfamily. As to expression, expressed by the skin glands.

The protein localises to the secreted. In terms of biological role, antimicrobial peptide with activity against Gram-positive and Gram-negative bacteria and against fungi. Has been tested against S.aureus (MIC=7.5 ug/mL), B.pumilus (MIC=15.0 ug/mL), B.cereus (MIC=75.0 ug/mL), E.coli (MIC=15.0 ug/mL), B.dysenteriae (MIC=30.0 ug/mL), A.cacoaceticus (MIC=60.0 ug/mL), P.aeruginosa (MIC=7.5 ug/mL) and C.albicans (MIC=5.0 ug/mL). Also shows a weak hemolytic activity. This chain is Temporin-ALj, found in Amolops loloensis (Lolokou Sucker Frog).